Here is a 235-residue protein sequence, read N- to C-terminus: Large ribosomal subunit protein uL3 (235 aa).

The tract at residues A150–E189 is disordered.

The protein belongs to the universal ribosomal protein uL3 family. In terms of assembly, part of the 50S ribosomal subunit. Forms a cluster with proteins L14 and L19.

Functionally, one of the primary rRNA binding proteins, it binds directly near the 3'-end of the 23S rRNA, where it nucleates assembly of the 50S subunit. The protein is Large ribosomal subunit protein uL3 of Protochlamydia amoebophila (strain UWE25).